A 163-amino-acid chain; its full sequence is SsrA-binding protein (163 aa).

The protein belongs to the SmpB family.

Its subcellular location is the cytoplasm. Functionally, required for rescue of stalled ribosomes mediated by trans-translation. Binds to transfer-messenger RNA (tmRNA), required for stable association of tmRNA with ribosomes. tmRNA and SmpB together mimic tRNA shape, replacing the anticodon stem-loop with SmpB. tmRNA is encoded by the ssrA gene; the 2 termini fold to resemble tRNA(Ala) and it encodes a 'tag peptide', a short internal open reading frame. During trans-translation Ala-aminoacylated tmRNA acts like a tRNA, entering the A-site of stalled ribosomes, displacing the stalled mRNA. The ribosome then switches to translate the ORF on the tmRNA; the nascent peptide is terminated with the 'tag peptide' encoded by the tmRNA and targeted for degradation. The ribosome is freed to recommence translation, which seems to be the essential function of trans-translation. The protein is SsrA-binding protein of Shewanella sp. (strain ANA-3).